The following is a 469-amino-acid chain: UDP-N-acetylmuramate--L-alanine ligase (469 aa).

113 to 119 (GTHGKTT) provides a ligand contact to ATP.

It belongs to the MurCDEF family.

Its subcellular location is the cytoplasm. It catalyses the reaction UDP-N-acetyl-alpha-D-muramate + L-alanine + ATP = UDP-N-acetyl-alpha-D-muramoyl-L-alanine + ADP + phosphate + H(+). The protein operates within cell wall biogenesis; peptidoglycan biosynthesis. Its function is as follows. Cell wall formation. The chain is UDP-N-acetylmuramate--L-alanine ligase from Neisseria gonorrhoeae (strain ATCC 700825 / FA 1090).